The chain runs to 91 residues: MTCGQVQGNLAQCIGFLQKGGVVPPSCCTGVKNILNSSRTTADRRAVCSCLKAAAGAVRGINPNNAEALPGKCGVNIPYKISTSTNCNSIN.

Cystine bridges form between C3-C50, C13-C27, C28-C73, and C48-C87. A 1,2-diacyl-sn-glycero-3-phosphocholine contacts are provided by R44 and Y79.

In terms of assembly, monomer.

Plant non-specific lipid-transfer proteins transfer phospholipids as well as galactolipids across membranes. May play a role in wax or cutin deposition in the cell walls of expanding epidermal cells and certain secretory tissues. Has antifungal activity against F.solani, F.oxysporum, P.aphanidermatum and S.rolfsii. Has antibacterial activity against the Gram-positive bacterium S.aureus but not against the Gram-negative bacterium S.typhimurium. The polypeptide is Non-specific lipid-transfer protein 1 (Vigna radiata var. radiata (Mung bean)).